The primary structure comprises 206 residues: ATP phosphoribosyltransferase (206 aa).

The protein belongs to the ATP phosphoribosyltransferase family. Short subfamily. As to quaternary structure, heteromultimer composed of HisG and HisZ subunits.

It is found in the cytoplasm. It catalyses the reaction 1-(5-phospho-beta-D-ribosyl)-ATP + diphosphate = 5-phospho-alpha-D-ribose 1-diphosphate + ATP. The protein operates within amino-acid biosynthesis; L-histidine biosynthesis; L-histidine from 5-phospho-alpha-D-ribose 1-diphosphate: step 1/9. In terms of biological role, catalyzes the condensation of ATP and 5-phosphoribose 1-diphosphate to form N'-(5'-phosphoribosyl)-ATP (PR-ATP). Has a crucial role in the pathway because the rate of histidine biosynthesis seems to be controlled primarily by regulation of HisG enzymatic activity. The chain is ATP phosphoribosyltransferase from Brachyspira hyodysenteriae (strain ATCC 49526 / WA1).